The following is a 337-amino-acid chain: tRNA N6-adenosine threonylcarbamoyltransferase (337 aa).

Residues His111 and His115 each contribute to the Fe cation site. Substrate-binding positions include 134–138 (LVSGG), Asp167, Gly180, and Asn272. Asp300 contacts Fe cation.

The protein belongs to the KAE1 / TsaD family. The cofactor is Fe(2+).

The protein resides in the cytoplasm. It catalyses the reaction L-threonylcarbamoyladenylate + adenosine(37) in tRNA = N(6)-L-threonylcarbamoyladenosine(37) in tRNA + AMP + H(+). Required for the formation of a threonylcarbamoyl group on adenosine at position 37 (t(6)A37) in tRNAs that read codons beginning with adenine. Is involved in the transfer of the threonylcarbamoyl moiety of threonylcarbamoyl-AMP (TC-AMP) to the N6 group of A37, together with TsaE and TsaB. TsaD likely plays a direct catalytic role in this reaction. The polypeptide is tRNA N6-adenosine threonylcarbamoyltransferase (Cronobacter sakazakii (strain ATCC BAA-894) (Enterobacter sakazakii)).